Here is a 350-residue protein sequence, read N- to C-terminus: MTKITNDLFLKAARKEQVDRIPVWYMRQAGRSQPEYRKLKEKYSLFEITHQPEICAYVTKLPVDQYGVDAAILYKDIMTPLPGMGVDVEIKSGIGPVIHNPIRTFQDVEKLAIFKPEIEVPYVLDTIKLLADDMLDVPLIGFAGAPFTLASYMIEGGPSKNYHQTKSFMYREPEVWAILMEKLGRMTANYLIAQINAGASAVQLFDSWVGALSRADYAKYIRPVIEMIVSEVKAAHPTTPIIMQAVGASHLLAEWETMPLDVVGVDWRETITSAREKVPTKAIQGNLDPSTLLAPAKCLEEAERILQEGVLEPGYIFNLGHGVFPEVPPEMLKKLTNYIHERSEILLKKG.

Substrate contacts are provided by residues Arg-27–Arg-31, Phe-46, Asp-76, Tyr-152, Ser-207, and His-321.

The protein belongs to the uroporphyrinogen decarboxylase family. As to quaternary structure, homodimer.

The protein resides in the cytoplasm. The catalysed reaction is uroporphyrinogen III + 4 H(+) = coproporphyrinogen III + 4 CO2. Its pathway is porphyrin-containing compound metabolism; protoporphyrin-IX biosynthesis; coproporphyrinogen-III from 5-aminolevulinate: step 4/4. Its function is as follows. Catalyzes the decarboxylation of four acetate groups of uroporphyrinogen-III to yield coproporphyrinogen-III. The chain is Uroporphyrinogen decarboxylase from Listeria monocytogenes serotype 4a (strain HCC23).